A 329-amino-acid chain; its full sequence is Secretory carrier-associated membrane protein 2 (329 aa).

Disordered regions lie at residues 1-21 and 51-72; these read MSAF…FQDP and VTQL…PTQP. At 1–153 the chain is on the cytoplasmic side; the sequence is MSAFDTNPFA…DYQRICKMLY (153 aa). Residues 154–174 form a helical membrane-spanning segment; that stretch reads YLWMLHSVTLFLNLLACLAWF. Residues 175-181 are Lumenal-facing; sequence SGNSSKG. The chain crosses the membrane as a helical span at residues 182–202; the sequence is VDFGLSILWFLIFTPCAFLCW. Topologically, residues 203 to 218 are cytoplasmic; the sequence is YRPIYKAFRSDNSFSF. Residues 203–218 form an interaction with SLC9A7 region; it reads YRPIYKAFRSDNSFSF. The chain crosses the membrane as a helical span at residues 219-239; sequence FVFFFVFFCQIGIYIIQLVGI. Topologically, residues 240–262 are lumenal; that stretch reads PGLGDSGWIAALSTLDNHSLAIS. A helical membrane pass occupies residues 263–283; sequence VIMMVVAGFFTLCAVLSVFLL. Residues 284–329 are Cytoplasmic-facing; it reads QRVHSLYRRTGASFQQAQEEFSQGIFSSRTFHRAASSAAQGAFQGN. Residues S319 and S320 each carry the phosphoserine modification.

Belongs to the SCAMP family. In terms of assembly, interacts with SLC6A4 and SLC9A7. Interacts with SLC9A5; this interaction regulates SLC9A5 cell-surface targeting and SLC9A5 activity. In terms of tissue distribution, widely expressed.

It localises to the golgi apparatus. It is found in the trans-Golgi network membrane. The protein resides in the recycling endosome membrane. Functionally, functions in post-Golgi recycling pathways. Acts as a recycling carrier to the cell surface. This chain is Secretory carrier-associated membrane protein 2 (SCAMP2), found in Homo sapiens (Human).